The chain runs to 179 residues: MLMGSIARRYARALFSLAVEQGRVEPWNDALQVLKNAVEGSPDLRDVLSNPVYSKEQRRAIVEKLASALKLEREPANLLFLLGDRNRLAYLAAVVDTFRSLADQHLGRLRARVTSAVPLDASAAQAIADRLSQATKATVLLDRAVDPALLGGVVAQVGSLVYDGSLRTQLEDLRKTLKQ.

Belongs to the ATPase delta chain family. F-type ATPases have 2 components, F(1) - the catalytic core - and F(0) - the membrane proton channel. F(1) has five subunits: alpha(3), beta(3), gamma(1), delta(1), epsilon(1). F(0) has three main subunits: a(1), b(2) and c(10-14). The alpha and beta chains form an alternating ring which encloses part of the gamma chain. F(1) is attached to F(0) by a central stalk formed by the gamma and epsilon chains, while a peripheral stalk is formed by the delta and b chains.

It is found in the cell inner membrane. F(1)F(0) ATP synthase produces ATP from ADP in the presence of a proton or sodium gradient. F-type ATPases consist of two structural domains, F(1) containing the extramembraneous catalytic core and F(0) containing the membrane proton channel, linked together by a central stalk and a peripheral stalk. During catalysis, ATP synthesis in the catalytic domain of F(1) is coupled via a rotary mechanism of the central stalk subunits to proton translocation. Its function is as follows. This protein is part of the stalk that links CF(0) to CF(1). It either transmits conformational changes from CF(0) to CF(1) or is implicated in proton conduction. This chain is ATP synthase subunit delta, found in Anaeromyxobacter sp. (strain K).